The following is a 486-amino-acid chain: Arginine/agmatine antiporter (486 aa).

A run of 12 helical transmembrane segments spans residues 12–32, 41–61, 85–105, 129–149, 160–180, 211–231, 242–262, 296–316, 341–361, 367–387, 418–438, and 461–481; these read LGAIALAGMVISSMIGGGIFS, AGAGAIILAWLLTGIGMFFIA, GFGPYVGFTIGWGYWLCQIFG, NTIPAIIGGSILIWVFNFIVL, IIGTVCKLVPLIVFIIITAFA, STMLVTLWAFIGIEGAVVMSA, ATLLGFVGCLTVYILLSILPF, VGLLIAILSSWLSWTIIVAEI, LSLYITSALMQITMLFVYFST, MLSITGVMVLPAYLASAAFLF, LWLIYAGGLNYLLMSVILLAL, and EVTKIIIIALLALLAIFLFST.

The protein belongs to the amino acid-polyamine-organocation (APC) superfamily. Basic amino acid/polyamine antiporter (APA) (TC 2.A.3.2) family.

It is found in the cell inner membrane. Its function is as follows. Catalyzes the exchange of L-arginine for agmatine. The arginine uptake by the bacterium in the macrophage may be a virulence factor against the host innate immune response. The polypeptide is Arginine/agmatine antiporter (aaxC) (Chlamydia caviae (strain ATCC VR-813 / DSM 19441 / 03DC25 / GPIC) (Chlamydophila caviae)).